The chain runs to 134 residues: C-C motif chemokine 21 (134 aa).

Residues methionine 1 to glycine 23 form the signal peptide. Intrachain disulfides connect cysteine 31-cysteine 57, cysteine 32-cysteine 75, and cysteine 103-cysteine 122. Residues glutamine 88–proline 134 form a disordered region. Positions lysine 98 to proline 134 are C-terminal basic extension. Over residues threonine 112 to cysteine 122 the composition is skewed to basic residues. Over residues lysine 123–proline 134 the composition is skewed to basic and acidic residues.

This sequence belongs to the intercrine beta (chemokine CC) family. In terms of assembly, monomer. Binds to CCR7. Interacts with PDPN; relocalizes PDPN to the basolateral membrane. Interacts with TNFAIP6 (via Link domain). Interacts with GPR174. In terms of tissue distribution, highly expressed in high endothelial venules of lymph nodes, spleen and appendix. Intermediate levels found in small intestine, thyroid gland and trachea. Low level expression in thymus, bone marrow, liver, and pancreas. Also found in tonsil, fetal heart and fetal spleen.

The protein resides in the secreted. Functionally, inhibits hemopoiesis and stimulates chemotaxis. Chemotactic in vitro for thymocytes and activated T-cells, but not for B-cells, macrophages, or neutrophils. Shows preferential activity towards naive T-cells. May play a role in mediating homing of lymphocytes to secondary lymphoid organs. Binds to atypical chemokine receptor ACKR4 and mediates the recruitment of beta-arrestin (ARRB1/2) to ACKR4. This Homo sapiens (Human) protein is C-C motif chemokine 21 (CCL21).